We begin with the raw amino-acid sequence, 245 residues long: Probable transcriptional regulatory protein BF2589 (245 aa).

Residues 225–245 (EDEDVQNVYTNMKPADNEGEE) form a disordered region.

It belongs to the TACO1 family.

It is found in the cytoplasm. The protein is Probable transcriptional regulatory protein BF2589 of Bacteroides fragilis (strain ATCC 25285 / DSM 2151 / CCUG 4856 / JCM 11019 / LMG 10263 / NCTC 9343 / Onslow / VPI 2553 / EN-2).